The following is an 87-amino-acid chain: Acyl carrier protein 3 (87 aa).

Positions 1–79 (MSNPTVLDQI…DLVTYIEAAL (79 aa)) constitute a Carrier domain. The residue at position 39 (serine 39) is an O-(pantetheine 4'-phosphoryl)serine.

The protein belongs to the acyl carrier protein (ACP) family. 4'-phosphopantetheine is transferred from CoA to a specific serine of apo-ACP by AcpS. This modification is essential for activity because fatty acids are bound in thioester linkage to the sulfhydryl of the prosthetic group.

It localises to the cytoplasm. The protein operates within lipid metabolism; fatty acid biosynthesis. Carrier of the growing fatty acid chain in fatty acid biosynthesis. This Ralstonia nicotianae (strain ATCC BAA-1114 / GMI1000) (Ralstonia solanacearum) protein is Acyl carrier protein 3.